The sequence spans 329 residues: MKRNIIFLVIHQFENLTMKKKQNIFFIFLLTVFFNFTVNSNVSAYPVFAQQGYKNPREANGRIVCANCHLAQKPVELEVPQAVLPDTVFEAMVKIPYDQQIKQVQANGKKGDLNVGMVLILPEGFELAPSDRLPEEMKKKVGNLYYQPYSSEQKNILVIGPIPGKLYNEMVVPLISPNPATNKNVNYLKYPIYLGGNRGRGQLYPDGSKSNNNLYNASATGKITEITPTGKKGGFDITIQTLNGETVIDKVPAGPELIVTKDQTIQVDQPLTNNPNVGGFGQAEAEIVLQNPARVQGLIIFLITIFITQLFLVLKKKQVEKVQLAEMNF.

Residues 1–44 form the signal peptide; that stretch reads MKRNIIFLVIHQFENLTMKKKQNIFFIFLLTVFFNFTVNSNVSA. 4 residues coordinate heme: Y45, C65, C68, and H69. Residues 295–315 traverse the membrane as a helical segment; the sequence is VQGLIIFLITIFITQLFLVLK.

Belongs to the cytochrome f family. In terms of assembly, the 4 large subunits of the cytochrome b6-f complex are cytochrome b6, subunit IV (17 kDa polypeptide, petD), cytochrome f and the Rieske protein, while the 4 small subunits are PetG, PetL, PetM and PetN. The complex functions as a dimer. Heme is required as a cofactor.

It localises to the plastid. It is found in the chloroplast thylakoid membrane. In terms of biological role, component of the cytochrome b6-f complex, which mediates electron transfer between photosystem II (PSII) and photosystem I (PSI), cyclic electron flow around PSI, and state transitions. In Tupiella akineta (Green alga), this protein is Cytochrome f.